Reading from the N-terminus, the 239-residue chain is Adapter protein MecA (239 aa).

Positions 118-128 (EQRTKEKEAQG) are enriched in basic and acidic residues. The disordered stretch occupies residues 118–137 (EQRTKEKEAQGSKRQKSSAR).

Belongs to the MecA family. In terms of assembly, homodimer.

Its function is as follows. Enables the recognition and targeting of unfolded and aggregated proteins to the ClpC protease or to other proteins involved in proteolysis. This is Adapter protein MecA from Staphylococcus aureus (strain COL).